Consider the following 173-residue polypeptide: Alkyl hydroperoxide reductase AhpD (173 aa).

The active-site Proton donor is the cysteine 131. The cysteines at positions 131 and 134 are disulfide-linked. Cysteine 134 serves as the catalytic Cysteine sulfenic acid (-SOH) intermediate.

The protein belongs to the AhpD family.

It carries out the reaction N(6)-[(R)-dihydrolipoyl]-L-lysyl-[lipoyl-carrier protein] + a hydroperoxide = N(6)-[(R)-lipoyl]-L-lysyl-[lipoyl-carrier protein] + an alcohol + H2O. Antioxidant protein with alkyl hydroperoxidase activity. Required for the reduction of the AhpC active site cysteine residues and for the regeneration of the AhpC enzyme activity. The sequence is that of Alkyl hydroperoxide reductase AhpD from Rhizorhabdus wittichii (strain DSM 6014 / CCUG 31198 / JCM 15750 / NBRC 105917 / EY 4224 / RW1) (Sphingomonas wittichii).